The following is a 194-amino-acid chain: MIIVGLTGSIGMGKSTAAGMFRELGVPVNDADEVVHMLYSGEAVAPVEAAFPGVAKGGVIDRAELSLRLVAAPERLAELERIVHPLVRAKEQEFVARHRADGAPFVLLDIPLLFETKAEARLDRIVVVTCDPEMQRERVMKRPGMTAEKFAMILKRQVPDSEKRARADYIVDTSDSFDVTRQQIRAIVDDLRAG.

In terms of domain architecture, DPCK spans 3-194 (IVGLTGSIGM…RAIVDDLRAG (192 aa)). An ATP-binding site is contributed by 11 to 16 (GMGKST).

It belongs to the CoaE family.

Its subcellular location is the cytoplasm. The catalysed reaction is 3'-dephospho-CoA + ATP = ADP + CoA + H(+). It participates in cofactor biosynthesis; coenzyme A biosynthesis; CoA from (R)-pantothenate: step 5/5. Functionally, catalyzes the phosphorylation of the 3'-hydroxyl group of dephosphocoenzyme A to form coenzyme A. The polypeptide is Dephospho-CoA kinase (Rhizobium meliloti (strain 1021) (Ensifer meliloti)).